Consider the following 185-residue polypeptide: Neuronal vesicle trafficking-associated protein 1 (185 aa).

At 1 to 82 (MVKLGNNFAE…ITEGVTERFK (82 aa)) the chain is on the cytoplasmic side. A helical; Signal-anchor for type II membrane protein membrane pass occupies residues 83–103 (VSVLVLFALAFLTCVVFLVVY). Over 104-185 (KVYKYDRACP…QETEAAEKSA (82 aa)) the chain is Lumenal. The tract at residues 129–164 (ESYYTEQDSSAREKFYTVINHYNLAKQSITRSVSPW) is required for GRIP1 interaction.

Belongs to the NSG family. Forms a complex with GRIP1, GRIA2 and STX12; controls the intracellular fate of AMPAR and the endosomal sorting of the GRIA2 subunit toward recycling and membrane targeting. Interacts with GRIP1. Interacts with STX12. Interacts with APP; could regulate APP processing. Interacts with FAM171A1. Widely expressed in brain and spinal cord. Expressed in neurons during maturation and synapse formation.

It localises to the membrane. The protein resides in the golgi apparatus. It is found in the trans-Golgi network membrane. Its subcellular location is the endosome membrane. The protein localises to the cell projection. It localises to the dendrite. The protein resides in the early endosome membrane. It is found in the late endosome membrane. Its subcellular location is the lysosome lumen. The protein localises to the recycling endosome membrane. It localises to the cytoplasmic vesicle membrane. The protein resides in the golgi stack membrane. It is found in the endosome. Its subcellular location is the multivesicular body membrane. The protein localises to the endoplasmic reticulum membrane. Plays a role in the recycling mechanism in neurons of multiple receptors, including AMPAR, APP and L1CAM and acts at the level of early endosomes to promote sorting of receptors toward a recycling pathway. Regulates sorting and recycling of GRIA2 through interaction with GRIP1 and then contributes to the regulation of synaptic transmission and plasticity by affecting the recycling and targeting of AMPA receptors to the synapse. Is required for faithful sorting of L1CAM to axons by facilitating trafficking from somatodendritic early endosome or the recycling endosome. In an other hand, induces apoptosis via the activation of CASP3 in response to DNA damage. The chain is Neuronal vesicle trafficking-associated protein 1 from Rattus norvegicus (Rat).